The sequence spans 664 residues: Zinc finger protein 710 (664 aa).

Residues lysine 110 and lysine 113 each participate in a glycyl lysine isopeptide (Lys-Gly) (interchain with G-Cter in SUMO2) cross-link. Positions 121-141 (VYEVSVPGDDKDAGPAEAPAE) are disordered. 3 C2H2-type zinc fingers span residues 295–317 (WQCR…ILGH), 323–345 (HSCP…LLTH), and 351–373 (HKCQ…MLLH). Lysine 377 is covalently cross-linked (Glycyl lysine isopeptide (Lys-Gly) (interchain with G-Cter in SUMO2)). 8 C2H2-type zinc fingers span residues 379–401 (YSCH…EVKH), 407–429 (HVCV…LASH), 435–457 (YQCL…MLKH), 463–485 (FVCT…SLTH), 491–513 (FKCE…MLIH), 519–541 (YQCH…MIVH), 547–569 (FKCK…MHLH), and 575–598 (FKCP…KVKH).

It belongs to the krueppel C2H2-type zinc-finger protein family.

The protein resides in the nucleus. May be involved in transcriptional regulation. The sequence is that of Zinc finger protein 710 (ZNF710) from Homo sapiens (Human).